Here is a 409-residue protein sequence, read N- to C-terminus: Elongation factor Tu, chloroplastic (409 aa).

In terms of domain architecture, tr-type G spans 10-214 (KQHVNIGTIG…NVDTYIPTPV (205 aa)). The interval 19 to 26 (GHVDHGKT) is G1. 19-26 (GHVDHGKT) lines the GTP pocket. Thr26 lines the Mg(2+) pocket. Residues 60-64 (GITIN) form a G2 region. The interval 81–84 (DCPG) is G3. GTP is bound by residues 81–85 (DCPGH) and 136–139 (NKED). A G4 region spans residues 136 to 139 (NKED). Residues 174-176 (SAL) are G5.

Belongs to the TRAFAC class translation factor GTPase superfamily. Classic translation factor GTPase family. EF-Tu/EF-1A subfamily.

The protein localises to the plastid. It is found in the chloroplast. It carries out the reaction GTP + H2O = GDP + phosphate + H(+). In terms of biological role, GTP hydrolase that promotes the GTP-dependent binding of aminoacyl-tRNA to the A-site of ribosomes during protein biosynthesis. The chain is Elongation factor Tu, chloroplastic (tufA) from Tupiella akineta (Green alga).